A 179-amino-acid chain; its full sequence is Cytochrome b6-f complex iron-sulfur subunit (179 aa).

The helical transmembrane segment at 21-43 (LLTFGTVTGVALGALYPVVNYFI) threads the bilayer. One can recognise a Rieske domain in the interval 61–162 (GNDIIVSEFL…ANVSDDKLVF (102 aa)). [2Fe-2S] cluster is bound by residues Cys-108, His-110, Cys-126, and His-129. An intrachain disulfide couples Cys-113 to Cys-128.

It belongs to the Rieske iron-sulfur protein family. In terms of assembly, the 4 large subunits of the cytochrome b6-f complex are cytochrome b6, subunit IV (17 kDa polypeptide, PetD), cytochrome f and the Rieske protein, while the 4 small subunits are PetG, PetL, PetM and PetN. The complex functions as a dimer. [2Fe-2S] cluster serves as cofactor.

The protein localises to the cellular thylakoid membrane. The catalysed reaction is 2 oxidized [plastocyanin] + a plastoquinol + 2 H(+)(in) = 2 reduced [plastocyanin] + a plastoquinone + 4 H(+)(out). Its function is as follows. Component of the cytochrome b6-f complex, which mediates electron transfer between photosystem II (PSII) and photosystem I (PSI), cyclic electron flow around PSI, and state transitions. This Trichodesmium erythraeum (strain IMS101) protein is Cytochrome b6-f complex iron-sulfur subunit.